The chain runs to 326 residues: tRNA uridine(34) hydroxylase (326 aa).

The Rhodanese domain maps to 123–217 (SDPEVLLIDT…YLEEVKPEES (95 aa)). Cysteine 177 (cysteine persulfide intermediate) is an active-site residue. The interval 293–326 (KSRGESHIGSDVKQVIEARRQDKVERKQRQHQEG) is disordered.

It belongs to the TrhO family.

The enzyme catalyses uridine(34) in tRNA + AH2 + O2 = 5-hydroxyuridine(34) in tRNA + A + H2O. Catalyzes oxygen-dependent 5-hydroxyuridine (ho5U) modification at position 34 in tRNAs. This Shewanella loihica (strain ATCC BAA-1088 / PV-4) protein is tRNA uridine(34) hydroxylase.